The primary structure comprises 438 residues: Dol-P-Man:Man(5)GlcNAc(2)-PP-Dol alpha-1,3-mannosyltransferase (438 aa).

At S13 the chain carries Phosphoserine. 11 helical membrane passes run 41 to 61 (YTLLVAACLCLAEVGITFWVI), 95 to 115 (TGPLVYPAGFVYIFMGLYYAT), 123 to 143 (MAQNIFAVLYLATLLLVFLIY), 149 to 169 (VPPFVFFFMCCASYRVHSIFV), 172 to 192 (LFNDPVAMVLLFLSINLLLAQ), 203 to 223 (LAVSVKMNVLLFAPGLLFLLL), 231 to 251 (ALPKLGICAGLQVVLGLPFLL), 289 to 309 (FHLALLTAHLTLLLLFALCRW), 332 to 352 (PLTPNQIVSTLFTSNFIGICF), 356 to 376 (LHYQFYVWYFHTLPYLLWAMP), and 407 to 427 (AALHICHAVILLQLWLGPQPF).

It belongs to the glycosyltransferase ALG3 family.

It is found in the endoplasmic reticulum membrane. The catalysed reaction is an alpha-D-Man-(1-&gt;2)-alpha-D-Man-(1-&gt;2)-alpha-D-Man-(1-&gt;3)-[alpha-D-Man-(1-&gt;6)]-beta-D-Man-(1-&gt;4)-beta-D-GlcNAc-(1-&gt;4)-alpha-D-GlcNAc-diphospho-di-trans,poly-cis-dolichol + a di-trans,poly-cis-dolichyl beta-D-mannosyl phosphate = an alpha-D-Man-(1-&gt;2)-alpha-D-Man-(1-&gt;2)-alpha-D-Man-(1-&gt;3)-[alpha-D-Man-(1-&gt;3)-alpha-D-Man-(1-&gt;6)]-beta-D-Man-(1-&gt;4)-beta-D-GlcNAc-(1-&gt;4)-alpha-D-GlcNAc-diphospho-di-trans,poly-cis-dolichol + a di-trans,poly-cis-dolichyl phosphate + H(+). The protein operates within protein modification; protein glycosylation. Functionally, dol-P-Man:Man(5)GlcNAc(2)-PP-Dol alpha-1,3-mannosyltransferase that operates in the biosynthetic pathway of dolichol-linked oligosaccharides, the glycan precursors employed in protein asparagine (N)-glycosylation. The assembly of dolichol-linked oligosaccharides begins on the cytosolic side of the endoplasmic reticulum membrane and finishes in its lumen. The sequential addition of sugars to dolichol pyrophosphate produces dolichol-linked oligosaccharides containing fourteen sugars, including two GlcNAcs, nine mannoses and three glucoses. Once assembled, the oligosaccharide is transferred from the lipid to nascent proteins by oligosaccharyltransferases. In the lumen of the endoplasmic reticulum, adds the first dolichyl beta-D-mannosyl phosphate derived mannose in an alpha-1,3 linkage to Man(5)GlcNAc(2)-PP-dolichol to produce Man(6)GlcNAc(2)-PP-dolichol. Man(6)GlcNAc(2)-PP-dolichol is a substrate for ALG9, the following enzyme in the biosynthetic pathway. The protein is Dol-P-Man:Man(5)GlcNAc(2)-PP-Dol alpha-1,3-mannosyltransferase of Homo sapiens (Human).